Here is a 472-residue protein sequence, read N- to C-terminus: Glutamate--tRNA ligase 2 (472 aa).

The 'HIGH' region signature appears at 12 to 22; the sequence is PSPSGLLHLGN. The 'KMSKS' region signature appears at 253 to 257; the sequence is PLSKR. Lys-256 contributes to the ATP binding site.

Belongs to the class-I aminoacyl-tRNA synthetase family. Glutamate--tRNA ligase type 1 subfamily. In terms of assembly, monomer.

The protein localises to the cytoplasm. It catalyses the reaction tRNA(Glu) + L-glutamate + ATP = L-glutamyl-tRNA(Glu) + AMP + diphosphate. Catalyzes the attachment of glutamate to tRNA(Glu) in a two-step reaction: glutamate is first activated by ATP to form Glu-AMP and then transferred to the acceptor end of tRNA(Glu). The chain is Glutamate--tRNA ligase 2 from Nitrosococcus oceani (strain ATCC 19707 / BCRC 17464 / JCM 30415 / NCIMB 11848 / C-107).